The chain runs to 443 residues: Serine--tRNA ligase (443 aa).

250–252 (TSE) provides a ligand contact to L-serine. 281–283 (RSE) lines the ATP pocket. Glu-304 serves as a coordination point for L-serine. ATP is bound at residue 368-371 (EISS). Ser-403 lines the L-serine pocket.

Belongs to the class-II aminoacyl-tRNA synthetase family. Type-1 seryl-tRNA synthetase subfamily. As to quaternary structure, homodimer. The tRNA molecule binds across the dimer.

Its subcellular location is the cytoplasm. The enzyme catalyses tRNA(Ser) + L-serine + ATP = L-seryl-tRNA(Ser) + AMP + diphosphate + H(+). It catalyses the reaction tRNA(Sec) + L-serine + ATP = L-seryl-tRNA(Sec) + AMP + diphosphate + H(+). Its pathway is aminoacyl-tRNA biosynthesis; selenocysteinyl-tRNA(Sec) biosynthesis; L-seryl-tRNA(Sec) from L-serine and tRNA(Sec): step 1/1. Its function is as follows. Catalyzes the attachment of serine to tRNA(Ser). Is also able to aminoacylate tRNA(Sec) with serine, to form the misacylated tRNA L-seryl-tRNA(Sec), which will be further converted into selenocysteinyl-tRNA(Sec). This Variovorax paradoxus (strain S110) protein is Serine--tRNA ligase.